Here is a 429-residue protein sequence, read N- to C-terminus: Adenylosuccinate synthetase (429 aa).

GTP-binding positions include 13–19 and 41–43; these read GDEGKGK and GHT. Aspartate 14 functions as the Proton acceptor in the catalytic mechanism. Aspartate 14 and glycine 41 together coordinate Mg(2+). Residues 14–17, 39–42, threonine 130, arginine 144, glutamine 225, threonine 240, and arginine 304 contribute to the IMP site; these read DEGK and NAGH. The active-site Proton donor is histidine 42. 300 to 306 is a binding site for substrate; it reads ATTGRAR. Residues arginine 306, 332–334, and 413–415 each bind GTP; these read KLD and STG.

It belongs to the adenylosuccinate synthetase family. Homodimer. The cofactor is Mg(2+).

It is found in the cytoplasm. It catalyses the reaction IMP + L-aspartate + GTP = N(6)-(1,2-dicarboxyethyl)-AMP + GDP + phosphate + 2 H(+). The protein operates within purine metabolism; AMP biosynthesis via de novo pathway; AMP from IMP: step 1/2. Functionally, plays an important role in the de novo pathway of purine nucleotide biosynthesis. Catalyzes the first committed step in the biosynthesis of AMP from IMP. This is Adenylosuccinate synthetase from Pseudomonas fluorescens (strain Pf0-1).